Consider the following 204-residue polypeptide: Twist-related protein 1 (204 aa).

A compositionally biased stretch (low complexity) spans 1-18 (MMQDVSSSPVSPADDSLS). The tract at residues 1-107 (MMQDVSSSPV…GGGSPQSYEE (107 aa)) is disordered. Over residues 34-43 (RGGRKRRSSR) the composition is skewed to basic residues. Composition is skewed to gly residues over residues 46-65 (AGGGAGPGGAAGGGVGGGDE) and 80-101 (GCGGGGSAGGGGGGGSSSGGGS). Residues 110-161 (TQRVMANVRERQRTQSLNEAFAALRKIIPTLPSDKLSKIQTLKLAARYIDFL) enclose the bHLH domain. Positions 163–193 (QVLQSDELDSKMASCSYVAHERFSYAFSVWR) are sufficient for transactivation activity.

Efficient DNA binding requires dimerization with another bHLH protein. Homodimer or heterodimer with E proteins such as TCF3. ID1 binds preferentially to TCF3 but does not interact efficiently with TWIST1 so ID1 levels control the amount of TCF3 available to dimerize with TWIST and thus determine the type of dimer formed.

Its subcellular location is the nucleus. Acts as a transcriptional regulator. Inhibits myogenesis by sequestrating E proteins, inhibiting trans-activation by MEF2, and inhibiting DNA-binding by MYOD1 through physical interaction. This interaction probably involves the basic domains of both proteins. Also represses expression of pro-inflammatory cytokines such as TNFA and IL1B. Regulates cranial suture patterning and fusion. Activates transcription as a heterodimer with E proteins. Regulates gene expression differentially, depending on dimer composition. Homodimers induce expression of FGFR2 and POSTN while heterodimers repress FGFR2 and POSTN expression and induce THBS1 expression. Heterodimerization is also required for osteoblast differentiation. Represses the activity of the circadian transcriptional activator: NPAS2-BMAL1 heterodimer. The sequence is that of Twist-related protein 1 (TWIST1) from Nomascus concolor (Black crested gibbon).